The sequence spans 390 residues: MAQSFKRVFLVVMDSVGIGEAPDAEQFGDLGAHTLGHIAEQRNGLNMPHLAQLGLSHIEPVQGVSADAAPIASFGKMEEVSAGKDTMTGHWEIMGLRIDTPFRVFEKFPEDLIGRLETFSGRKIIGNKPASGTEILDELGQEHVDTGALIVYTSADSVLQIAAHEEVVPLEELYRICEYARDITRDDPYMLGRIIARPFLGEQGAWVRTSNRHDYALKPFDRTVMNELETAGLDVISLGKIADIFDGEGVTDAIRTKSNMDGMDQLVKQLDRDFTGLCFLNLVDFDALFGHRRDPQGYGQALEEFDARLLEVFERLQEDDLLIITADHGNDPVHPGTDHTREYVPLLVYSKSGAAKDLGIRSTFADLGATVADNFNVKMPAHGKSFLSEL.

Residues aspartate 14, aspartate 286, histidine 291, aspartate 327, histidine 328, and histidine 339 each contribute to the Mn(2+) site.

The protein belongs to the phosphopentomutase family. It depends on Mn(2+) as a cofactor.

Its subcellular location is the cytoplasm. It catalyses the reaction 2-deoxy-alpha-D-ribose 1-phosphate = 2-deoxy-D-ribose 5-phosphate. The catalysed reaction is alpha-D-ribose 1-phosphate = D-ribose 5-phosphate. Its pathway is carbohydrate degradation; 2-deoxy-D-ribose 1-phosphate degradation; D-glyceraldehyde 3-phosphate and acetaldehyde from 2-deoxy-alpha-D-ribose 1-phosphate: step 1/2. Isomerase that catalyzes the conversion of deoxy-ribose 1-phosphate (dRib-1-P) and ribose 1-phosphate (Rib-1-P) to deoxy-ribose 5-phosphate (dRib-5-P) and ribose 5-phosphate (Rib-5-P), respectively. The protein is Phosphopentomutase of Exiguobacterium sibiricum (strain DSM 17290 / CCUG 55495 / CIP 109462 / JCM 13490 / 255-15).